A 3498-amino-acid polypeptide reads, in one-letter code: Mediator of RNA polymerase II transcription subunit 12 (3498 aa).

Disordered regions lie at residues 365 to 456 (IKQH…HTDI), 497 to 764 (GGVG…EPEK), 2209 to 2576 (AKKR…AYMK), 2589 to 2620 (ENNR…EAYA), 2637 to 2889 (LRKE…KEKQ), and 2917 to 3498 (NVAG…PNQY). Basic residues predominate over residues 368 to 394 (HEKRKAGSLKKSERRRRRGLSKNRPKK). The span at 404–416 (SLDHDKVQIKQEP) shows a compositional bias: basic and acidic residues. Polar residues-rich tracts occupy residues 424–440 (GQQS…SHQY) and 512–536 (SNPT…SASP). Positions 539-570 (SVDKENECEKKEDESKTKEKNKDKEKDKEKEK) form a coiled coil. 2 stretches are compositionally biased toward basic and acidic residues: residues 540 to 578 (VDKE…HTND) and 593 to 614 (ANDK…TGKE). The span at 621 to 630 (SKTAKTSTSA) shows a compositional bias: low complexity. Basic and acidic residues-rich tracts occupy residues 691-719 (EVDK…KKAD), 738-764 (ESEK…EPEK), and 2209-2285 (AKKR…KRAS). The tract at residues 2142-3498 (QTTRLDKVAK…YPNQQPPNQY (1357 aa)) is required for nuclear localization. A coiled-coil region spans residues 2203 to 2290 (VIDEEEAKKR…EKRASDAAAA (88 aa)). Composition is skewed to low complexity over residues 2342-2360 (RADT…APIA) and 2409-2431 (LADA…SSMP). The stretch at 2395–2420 (RNLLNRKKEEKRNSLADASAAAAAAN) forms a coiled coil. A compositionally biased stretch (polar residues) spans 2444 to 2456 (QSAGATQQLQGMQ). Residues 2459–2479 (QMGGSMSGMNQNMGGMNQSMS) are compositionally biased toward low complexity. A compositionally biased stretch (polar residues) spans 2514 to 2530 (NRSSGPVSSETRQQIME). 3 stretches are compositionally biased toward basic and acidic residues: residues 2547-2576 (QKQR…AYMK), 2589-2616 (ENNR…RAAE), and 2637-2724 (LRKE…EQQR). The span at 2725-2770 (RSQQNPYMNQQGQYSQQPPPSYQQSSYPNNYQPGQQGNQPPNYQQP) shows a compositional bias: low complexity. Positions 2771–2783 (SHQSMQQGHQAGY) are enriched in polar residues. Residues 2784–2810 (QQTSNQMQMNMQQQQNRQQGGPQQSFS) show a composition bias toward low complexity. Composition is skewed to polar residues over residues 2816–2827 (NQPSQPGYSGYN), 2842–2852 (RNPFGNQQDMQ), 2868–2881 (HAQQ…QLSL), and 2926–2956 (GQQQ…SSNP). Low complexity predominate over residues 2957-2993 (QGGMQSYQQQQPVLGQPGPIQTGQSTQQQIPAQSQQQ). Residues 2994–3009 (YNSGRPQMHTTPTKND) show a composition bias toward polar residues. The segment covering 3039–3100 (GQNVPGGYQQ…NVSQSQSAAQ (62 aa)) has biased composition (low complexity). Residues 3103–3127 (RPSQDSAYQQSGYNQTGNQSYQRPD) show a composition bias toward polar residues. Composition is skewed to low complexity over residues 3128–3184 (QQQQ…SAQY) and 3192–3223 (QGYD…QTQQ). Polar residues predominate over residues 3231-3253 (SGYTANSGGSSNILNQSMEESGL). The span at 3254-3311 (NQGFSGASSNASSQQGGSSQMQQSGYGMPGNQMQMQQNQKQQVQRGMPTGMGQTNMGQ) shows a compositional bias: low complexity. The segment covering 3312 to 3321 (SGMGQSGMGQ) has biased composition (gly residues). Low complexity-rich tracts occupy residues 3336–3356 (QGQQ…NQRG) and 3370–3408 (QQQH…QGQQ). The span at 3414 to 3425 (PSQQQSGAAYSN) shows a compositional bias: polar residues. Residues 3426 to 3436 (QMQFQGVRQGQ) are compositionally biased toward low complexity. Over residues 3437-3446 (QGMGGMGGSG) the composition is skewed to gly residues. Positions 3447-3498 (QQQPQTQPHGSNQYYQQQQDQRMQQQPQQPGQQQQHGYGMGQYPNQQPPNQY) are enriched in low complexity.

It belongs to the Mediator complex subunit 12 family. In terms of assembly, component of the Mediator complex. Ubiquitously expressed.

It is found in the nucleus. Its function is as follows. Component of the Mediator complex, a coactivator involved in regulated gene transcription of nearly all RNA polymerase II-dependent genes. Mediator functions as a bridge to convey information from gene-specific regulatory proteins to the basal RNA polymerase II transcription machinery. Mediator is recruited to promoters by direct interactions with regulatory proteins and serves as a scaffold for the assembly of a functional preinitiation complex with RNA polymerase II and the general transcription factors. Functions downstream of let-60 during vulval induction. Required for asymmetric division of T-cells and for hypodermal development. This is Mediator of RNA polymerase II transcription subunit 12 (dpy-22) from Caenorhabditis elegans.